The chain runs to 98 residues: Small ribosomal subunit protein bS20 (98 aa).

The segment covering 1–15 (MAPKKTTKKGGPKKR) has biased composition (basic residues). The disordered stretch occupies residues 1–21 (MAPKKTTKKGGPKKRPSAEKR).

The protein belongs to the bacterial ribosomal protein bS20 family.

In terms of biological role, binds directly to 16S ribosomal RNA. In Chlamydia abortus (strain DSM 27085 / S26/3) (Chlamydophila abortus), this protein is Small ribosomal subunit protein bS20.